A 126-amino-acid chain; its full sequence is Putative lipoprotein LprD (126 aa).

An N-terminal signal peptide occupies residues 1–21 (MSTTRRRRPALIALVIIATCG). Residue cysteine 22 is the site of N-palmitoyl cysteine attachment. The S-diacylglycerol cysteine moiety is linked to residue cysteine 22. The helical transmembrane segment at 40–60 (FQNLGYALQWPLFAWFCVYAY) threads the bilayer. The segment at 70–101 (PPQPPTGGAAAEIPAGLLPERPKPAQQPPDDP) is disordered.

The protein to M.leprae ML1177.

It is found in the cell membrane. The polypeptide is Putative lipoprotein LprD (lprD) (Mycobacterium tuberculosis (strain CDC 1551 / Oshkosh)).